The sequence spans 237 residues: Glucosamine-6-phosphate deaminase (237 aa).

Catalysis depends on Asp-67, which acts as the Proton acceptor; for enolization step. Asn-136 acts as the For ring-opening step in catalysis. His-138 functions as the Proton acceptor; for ring-opening step in the catalytic mechanism. Catalysis depends on Glu-143, which acts as the For ring-opening step.

It belongs to the glucosamine/galactosamine-6-phosphate isomerase family. NagB subfamily.

It catalyses the reaction alpha-D-glucosamine 6-phosphate + H2O = beta-D-fructose 6-phosphate + NH4(+). It functions in the pathway amino-sugar metabolism; N-acetylneuraminate degradation; D-fructose 6-phosphate from N-acetylneuraminate: step 5/5. Catalyzes the reversible isomerization-deamination of glucosamine 6-phosphate (GlcN6P) to form fructose 6-phosphate (Fru6P) and ammonium ion. This chain is Glucosamine-6-phosphate deaminase, found in Lysinibacillus sphaericus (strain C3-41).